Reading from the N-terminus, the 613-residue chain is ATP-dependent RNA helicase DeaD (613 aa).

A Q motif motif is present at residues 5–33 (ITFNDLGLPEFILKAVSDLGFETPSPIQQ). The Helicase ATP-binding domain maps to 36 to 207 (IPHLLNGNDV…KRFMNDPQEV (172 aa)). 49-56 (AQTGSGKT) provides a ligand contact to ATP. A DEAD box motif is present at residues 155 to 158 (DEAD). Residues 231–378 (KNEALLRFLE…EVELPNHLVL (148 aa)) enclose the Helicase C-terminal domain. Disordered stretches follow at residues 434–476 (ILPP…PQPM) and 552–613 (AVKS…RSSF). Composition is skewed to basic and acidic residues over residues 440–469 (PMEKRRRERNDRGDRRENPRSAERRGERKG) and 556–613 (DNSR…RSSF).

This sequence belongs to the DEAD box helicase family. DeaD/CsdA subfamily.

It localises to the cytoplasm. The catalysed reaction is ATP + H2O = ADP + phosphate + H(+). In terms of biological role, DEAD-box RNA helicase involved in various cellular processes at low temperature, including ribosome biogenesis, mRNA degradation and translation initiation. The protein is ATP-dependent RNA helicase DeaD of Haemophilus influenzae (strain ATCC 51907 / DSM 11121 / KW20 / Rd).